A 275-amino-acid polypeptide reads, in one-letter code: Bifunctional protein FolD (275 aa).

NADP(+) is bound by residues 161–163, S186, and T227; that span reads GRS.

The protein belongs to the tetrahydrofolate dehydrogenase/cyclohydrolase family. Homodimer.

The catalysed reaction is (6R)-5,10-methylene-5,6,7,8-tetrahydrofolate + NADP(+) = (6R)-5,10-methenyltetrahydrofolate + NADPH. The enzyme catalyses (6R)-5,10-methenyltetrahydrofolate + H2O = (6R)-10-formyltetrahydrofolate + H(+). It participates in one-carbon metabolism; tetrahydrofolate interconversion. Functionally, catalyzes the oxidation of 5,10-methylenetetrahydrofolate to 5,10-methenyltetrahydrofolate and then the hydrolysis of 5,10-methenyltetrahydrofolate to 10-formyltetrahydrofolate. The polypeptide is Bifunctional protein FolD (Parafrankia sp. (strain EAN1pec)).